A 148-amino-acid chain; its full sequence is Cuticle protein 8 (148 aa).

Tandem repeats lie at residues 16-19 (AAPA), Ala-22, 28-31 (AAPV), 37-40 (AAPA), and 44-47 (AAPV). In terms of domain architecture, Chitin-binding type R&amp;R spans 58–128 (YPKYEFNYGV…RTPGTHPVAV (71 aa)).

Functionally, component of the cuticle of migratory locust which contains more than 100 different structural proteins. This Locusta migratoria (Migratory locust) protein is Cuticle protein 8.